An 84-amino-acid polypeptide reads, in one-letter code: DNA-directed RNA polymerase subunit Rpo5 (84 aa).

It belongs to the archaeal Rpo5/eukaryotic RPB5 RNA polymerase subunit family. In terms of assembly, part of the RNA polymerase complex.

It is found in the cytoplasm. It catalyses the reaction RNA(n) + a ribonucleoside 5'-triphosphate = RNA(n+1) + diphosphate. Functionally, DNA-dependent RNA polymerase (RNAP) catalyzes the transcription of DNA into RNA using the four ribonucleoside triphosphates as substrates. The polypeptide is DNA-directed RNA polymerase subunit Rpo5 (Sulfurisphaera tokodaii (strain DSM 16993 / JCM 10545 / NBRC 100140 / 7) (Sulfolobus tokodaii)).